The chain runs to 476 residues: Endonuclease SceI small subunit (476 aa).

Belongs to the LAGLIDADG endonuclease family. As to quaternary structure, endonuclease SceI (Endo.SceI) is a heterodimer of ENS2 and SSC1. The N-terminus is blocked.

The protein resides in the mitochondrion. Functionally, catalytic component of endonuclease SceI (Endo.SceI), which cleaves specifically at multiple sites on mitochondrial DNA and produces double-stranded breaks. The polypeptide is Endonuclease SceI small subunit (ENS2) (Saccharomyces cerevisiae (Baker's yeast)).